A 162-amino-acid chain; its full sequence is NADH-quinone oxidoreductase subunit I 1 (162 aa).

4Fe-4S ferredoxin-type domains follow at residues 52–82 and 93–122; these read LRRY…IEAG and VRYD…EGPN. [4Fe-4S] cluster-binding residues include cysteine 62, cysteine 65, cysteine 68, cysteine 72, cysteine 102, cysteine 105, cysteine 108, and cysteine 112.

Belongs to the complex I 23 kDa subunit family. NDH-1 is composed of 14 different subunits. Subunits NuoA, H, J, K, L, M, N constitute the membrane sector of the complex. The cofactor is [4Fe-4S] cluster.

It localises to the cell inner membrane. It carries out the reaction a quinone + NADH + 5 H(+)(in) = a quinol + NAD(+) + 4 H(+)(out). NDH-1 shuttles electrons from NADH, via FMN and iron-sulfur (Fe-S) centers, to quinones in the respiratory chain. The immediate electron acceptor for the enzyme in this species is believed to be ubiquinone. Couples the redox reaction to proton translocation (for every two electrons transferred, four hydrogen ions are translocated across the cytoplasmic membrane), and thus conserves the redox energy in a proton gradient. In Rhodopseudomonas palustris (strain ATCC BAA-98 / CGA009), this protein is NADH-quinone oxidoreductase subunit I 1.